Here is a 504-residue protein sequence, read N- to C-terminus: Maturase K (504 aa).

This sequence belongs to the intron maturase 2 family. MatK subfamily.

The protein localises to the plastid. It localises to the chloroplast. Functionally, usually encoded in the trnK tRNA gene intron. Probably assists in splicing its own and other chloroplast group II introns. This chain is Maturase K, found in Mentzelia laevicaulis (Blazing star).